The following is a 295-amino-acid chain: Protoheme IX farnesyltransferase (295 aa).

Transmembrane regions (helical) follow at residues 24–44, 45–65, 94–114, 117–137, 144–164, 171–191, 216–236, 240–260, and 272–292; these read IMYLVVFTAVAGMVTAPGSMH, PFLALISLICVALGSGSAGAI, SALEFGITLGILSVFIMAIAV, ISAALLAVSILFYVFIYTIWL, NIVIGGAAGAFPPMIGWAAVT, SFILFLVIFMWTPPHFWALSL, KYILIYSVLLVLTSLLPALFL, LLYLSMATFEGCVFIWYAVSV, and MFSYSISYLFSLFASIIFCSI.

It belongs to the UbiA prenyltransferase family. Protoheme IX farnesyltransferase subfamily.

The protein localises to the cell membrane. It carries out the reaction heme b + (2E,6E)-farnesyl diphosphate + H2O = Fe(II)-heme o + diphosphate. It functions in the pathway porphyrin-containing compound metabolism; heme O biosynthesis; heme O from protoheme: step 1/1. Converts heme B (protoheme IX) to heme O by substitution of the vinyl group on carbon 2 of heme B porphyrin ring with a hydroxyethyl farnesyl side group. The protein is Protoheme IX farnesyltransferase of Wolbachia pipientis wMel.